The following is a 605-amino-acid chain: Granule-bound starch synthase 1, chloroplastic/amyloplastic (605 aa).

Residues 1 to 72 (MAALATSQLV…GGRFPSLVVC (72 aa)) constitute a chloroplast transit peptide. Residue Lys91 participates in ADP-alpha-D-glucose binding.

Belongs to the glycosyltransferase 1 family. Bacterial/plant glycogen synthase subfamily.

It localises to the plastid. Its subcellular location is the chloroplast. The protein localises to the amyloplast. It catalyses the reaction an NDP-alpha-D-glucose + [(1-&gt;4)-alpha-D-glucosyl](n) = [(1-&gt;4)-alpha-D-glucosyl](n+1) + a ribonucleoside 5'-diphosphate + H(+). The protein operates within glycan biosynthesis; starch biosynthesis. In terms of biological role, required for the synthesis of amylose in endosperm. The sequence is that of Granule-bound starch synthase 1, chloroplastic/amyloplastic (WAXY) from Zea mays (Maize).